Consider the following 229-residue polypeptide: MMKALLVADDPVSVNLVFENHTQCGYEVIHYRSALKALDNMEEIQPQLLFINASDFPRHWRVLTQFFKHQSVCGARVILLVNTPSSSLSARQVAQAGVHALIDYTLSPEEGRKALCGVLTPSACAGSVDVGHAHTCQADFVFTNPCSGSIVTGTVREVSEEGVDFIPDFPASVNNLQEQDVLEHCALKVAHDILGVRCSFHSSDGRILLRFIDPDASLVHAVRSVTGTT.

This is an uncharacterized protein from Treponema pallidum (strain Nichols).